A 103-amino-acid polypeptide reads, in one-letter code: Histone H4 (103 aa).

A compositionally biased stretch (gly residues) spans 1-14 (MSGRGKGGKGLGKG). The interval 1–20 (MSGRGKGGKGLGKGGAKRHR) is disordered. An N-acetylserine modification is found at Ser-2. An N6-acetyl-N6-methyllysine; alternate mark is found at Lys-6 and Lys-13. Lys-17 carries the N6-acetyllysine modification. A DNA-binding region spans residues 17–21 (KRHRK). Position 21 is an N6-methyllysine (Lys-21).

This sequence belongs to the histone H4 family. In terms of assembly, the nucleosome is a histone octamer containing two molecules each of H2A, H2B, H3 and H4 assembled in one H3-H4 heterotetramer and two H2A-H2B heterodimers. The octamer wraps approximately 147 bp of DNA.

It localises to the nucleus. It is found in the chromosome. In terms of biological role, core component of nucleosome. Nucleosomes wrap and compact DNA into chromatin, limiting DNA accessibility to the cellular machineries which require DNA as a template. Histones thereby play a central role in transcription regulation, DNA repair, DNA replication and chromosomal stability. DNA accessibility is regulated via a complex set of post-translational modifications of histones, also called histone code, and nucleosome remodeling. The protein is Histone H4 (H4DEKL) of Dendronephthya klunzingeri (Klunzinger's soft coral).